Here is a 621-residue protein sequence, read N- to C-terminus: Complex I assembly factor ACAD9, mitochondrial (621 aa).

A mitochondrion-targeting transit peptide spans 1-37 (MSGCGLFLRTTAAARACRGLVVSTANRRLLRTSPPVR). K41 bears the N6-acetyllysine mark. K92 is modified (N6-succinyllysine). The active-site Proton acceptor is E426. T478 bears the Phosphothreonine mark. Position 521 is an N6-acetyllysine; alternate (K521). An N6-succinyllysine; alternate modification is found at K521.

It belongs to the acyl-CoA dehydrogenase family. In terms of assembly, homodimer. Interacts with NDUFAF1 and ECSIT. Part of the mitochondrial complex I assembly/MCIA complex that comprises at least the core subunits TMEM126B, NDUFAF1, ECSIT and ACAD9 and complement subunits such as COA1 and TMEM186. Interacts with TMEM70 and TMEM242. FAD is required as a cofactor. Ubiquitously expressed in most normal human tissues and cancer cell lines with high level of expression in heart, skeletal muscles, brain, kidney and liver. In the cerebellum uniquely expressed in the granular layer (at protein level).

It is found in the mitochondrion inner membrane. It carries out the reaction eicosanoyl-CoA + oxidized [electron-transfer flavoprotein] + H(+) = (2E)-eicosenoyl-CoA + reduced [electron-transfer flavoprotein]. The catalysed reaction is octadecanoyl-CoA + oxidized [electron-transfer flavoprotein] + H(+) = (2E)-octadecenoyl-CoA + reduced [electron-transfer flavoprotein]. It catalyses the reaction oxidized [electron-transfer flavoprotein] + hexadecanoyl-CoA + H(+) = (2E)-hexadecenoyl-CoA + reduced [electron-transfer flavoprotein]. The enzyme catalyses decanoyl-CoA + oxidized [electron-transfer flavoprotein] + H(+) = (2E)-decenoyl-CoA + reduced [electron-transfer flavoprotein]. It carries out the reaction nonanoyl-CoA + oxidized [electron-transfer flavoprotein] + H(+) = (2E)-nonenoyl-CoA + reduced [electron-transfer flavoprotein]. The catalysed reaction is pentadecanoyl-CoA + oxidized [electron-transfer flavoprotein] + H(+) = (2E)-pentadecenoyl-CoA + reduced [electron-transfer flavoprotein]. It catalyses the reaction undecanoyl-CoA + oxidized [electron-transfer flavoprotein] + H(+) = trans-2-undecenoyl-CoA + reduced [electron-transfer flavoprotein]. The enzyme catalyses (9Z)-hexadecenoyl-CoA + oxidized [electron-transfer flavoprotein] + H(+) = (2E,9Z)-hexadecadienoyl-CoA + reduced [electron-transfer flavoprotein]. It carries out the reaction heptadecanoyl-CoA + oxidized [electron-transfer flavoprotein] + H(+) = trans-2-heptadecenoyl-CoA + reduced [electron-transfer flavoprotein]. The catalysed reaction is (9E)-octadecenoyl-CoA + oxidized [electron-transfer flavoprotein] + H(+) = (2E,9E)-octadecadienoyl-CoA + reduced [electron-transfer flavoprotein]. It catalyses the reaction oxidized [electron-transfer flavoprotein] + (9Z)-octadecenoyl-CoA + H(+) = (2E,9Z)-octadecadienoyl-CoA + reduced [electron-transfer flavoprotein]. The enzyme catalyses (9Z,12Z)-octadecadienoyl-CoA + oxidized [electron-transfer flavoprotein] + H(+) = (2E,9Z,12Z)-octadecatrienoyl-CoA + reduced [electron-transfer flavoprotein]. It carries out the reaction (4Z,7Z,10Z,13Z,16Z,19Z)-docosahexaenoyl-CoA + oxidized [electron-transfer flavoprotein] + H(+) = (2E,4Z,7Z,10Z,13Z,16Z,19Z)-docosaheptaenoyl-CoA + reduced [electron-transfer flavoprotein]. The catalysed reaction is tetradecanoyl-CoA + oxidized [electron-transfer flavoprotein] + H(+) = (2E)-tetradecenoyl-CoA + reduced [electron-transfer flavoprotein]. As part of the MCIA complex, primarily participates in the assembly of the mitochondrial complex I and therefore plays a role in oxidative phosphorylation. This moonlighting protein also has a dehydrogenase activity toward a broad range of substrates with greater specificity for long-chain unsaturated acyl-CoAs. However, in vivo, it does not seem to play a primary role in fatty acid oxidation. In addition, the function in complex I assembly is independent of the dehydrogenase activity of the protein. This chain is Complex I assembly factor ACAD9, mitochondrial, found in Homo sapiens (Human).